A 121-amino-acid polypeptide reads, in one-letter code: Large ribosomal subunit protein bL12 (121 aa).

It belongs to the bacterial ribosomal protein bL12 family. As to quaternary structure, homodimer. Part of the ribosomal stalk of the 50S ribosomal subunit. Forms a multimeric L10(L12)X complex, where L10 forms an elongated spine to which 2 to 4 L12 dimers bind in a sequential fashion. Binds GTP-bound translation factors.

In terms of biological role, forms part of the ribosomal stalk which helps the ribosome interact with GTP-bound translation factors. Is thus essential for accurate translation. The sequence is that of Large ribosomal subunit protein bL12 from Streptococcus agalactiae serotype Ia (strain ATCC 27591 / A909 / CDC SS700).